The primary structure comprises 203 residues: MRTFIIKANKAHTKADFKLKDLPGTSGRIDLLCRVLNSAFLLSHGFRKNVRVWLSLYGPPNPPKAIRFEGQGMKPKTLNPDELSTAKLIIKALKVGENLREPSKEIQVLPGIYVSNLTFEDIIRRTLKGATLYYLHEEGRPIERVNFSQNVAFVLGDHEGLTPEDEAFLSGIAEKVSIGRKSYLASHVVAYVNIFLDSITPPP.

Leu-135 and Gly-156 together coordinate S-adenosyl-L-methionine.

The protein belongs to the methyltransferase superfamily. TrmY family. Homodimer.

The protein localises to the cytoplasm. The catalysed reaction is pseudouridine(54) in tRNA + S-adenosyl-L-methionine = N(1)-methylpseudouridine(54) in tRNA + S-adenosyl-L-homocysteine + H(+). Its function is as follows. Specifically catalyzes the N1-methylation of pseudouridine at position 54 (Psi54) in tRNAs. This chain is tRNA (pseudouridine(54)-N(1))-methyltransferase, found in Thermococcus onnurineus (strain NA1).